We begin with the raw amino-acid sequence, 156 residues long: Small ribosomal subunit protein uS7 (156 aa).

Belongs to the universal ribosomal protein uS7 family. Part of the 30S ribosomal subunit. Contacts proteins S9 and S11.

One of the primary rRNA binding proteins, it binds directly to 16S rRNA where it nucleates assembly of the head domain of the 30S subunit. Is located at the subunit interface close to the decoding center, probably blocks exit of the E-site tRNA. The chain is Small ribosomal subunit protein uS7 from Tolumonas auensis (strain DSM 9187 / NBRC 110442 / TA 4).